We begin with the raw amino-acid sequence, 312 residues long: Malate dehydrogenase (312 aa).

NAD(+) contacts are provided by residues 7-13 and Asp-34; that span reads GAAGGIG. Residues Arg-81 and Arg-87 each coordinate substrate. NAD(+) is bound by residues Asn-94 and 117–119; that span reads ITN. 2 residues coordinate substrate: Asn-119 and Arg-153. The active-site Proton acceptor is His-177. Met-227 contacts NAD(+).

Belongs to the LDH/MDH superfamily. MDH type 1 family. Homodimer.

It catalyses the reaction (S)-malate + NAD(+) = oxaloacetate + NADH + H(+). In terms of biological role, catalyzes the reversible oxidation of malate to oxaloacetate. The protein is Malate dehydrogenase of Klebsiella pneumoniae (strain 342).